The sequence spans 644 residues: Phosphatidylinositol polyphosphate 5-phosphatase type IV (644 aa).

Residues 1-193 (MPSKAENLRP…RLPSLLPPRP (193 aa)) form a disordered region. 8 tandem repeats follow at residues 10 to 13 (PSEP), 15 to 18 (PQPP), 28 to 31 (PGAP), 39 to 42 (PPDA), 55 to 58 (PATP), 69 to 71 (PIA), 72 to 74 (PRP), and 75 to 78 (PARP). The 13 X 4 AA repeats of P-X-X-P stretch occupies residues 10–242 (PSEPAPQPPE…SLGPGRPRSP (233 aa)). Positions 78–90 (PRLERALSLDDKG) are enriched in basic and acidic residues. Ser-99 bears the Phosphoserine mark. Residues 107–118 (NGTSPSRGSVQS) show a composition bias toward polar residues. Residues 121–124 (PGAP) form repeat 9. A compositionally biased stretch (low complexity) spans 152-163 (GSPSSGGNPLSG). Repeat copies occupy residues 169–172 (PNLP), 183–185 (PRL), 190–193 (PPRP), and 236–239 (PGRP). 2 positions are modified to phosphoserine: Ser-241 and Ser-256. Cysteine methyl ester is present on Cys-641. A lipid anchor (S-farnesyl cysteine) is attached at Cys-641. A propeptide spans 642-644 (SVS) (removed in mature form).

This sequence belongs to the inositol 1,4,5-trisphosphate 5-phosphatase type IV family. In terms of assembly, interacts (when prenylated) with PDE6D; this is important for normal location in cilia. In terms of tissue distribution, detected in brain, heart, pancreas, testis and spleen.

Its subcellular location is the cytoplasm. The protein localises to the cytoskeleton. The protein resides in the cilium axoneme. It is found in the golgi apparatus. It localises to the golgi stack membrane. Its subcellular location is the cell membrane. The protein localises to the cell projection. The protein resides in the ruffle. It is found in the nucleus. It carries out the reaction a 1,2-diacyl-sn-glycero-3-phospho-(1D-myo-inositol-4,5-bisphosphate) + H2O = a 1,2-diacyl-sn-glycero-3-phospho-(1D-myo-inositol 4-phosphate) + phosphate. The catalysed reaction is a 1,2-diacyl-sn-glycero-3-phospho-(1D-myo-inositol-3,4,5-trisphosphate) + H2O = a 1,2-diacyl-sn-glycero-3-phospho-(1D-myo-inositol-3,4-bisphosphate) + phosphate. It catalyses the reaction a 1,2-diacyl-sn-glycero-3-phospho-(1D-myo-inositol-3,5-bisphosphate) + H2O = a 1,2-diacyl-sn-glycero-3-phospho-(1D-myo-inositol-3-phosphate) + phosphate. With respect to regulation, active in the presence of octyl-glucoside or Triton X-100, but completely inhibited by CTAB. Phosphatidylinositol (PtdIns) phosphatase that specifically hydrolyzes the 5-phosphate of phosphatidylinositol-3,4,5-trisphosphate (PtdIns(3,4,5)P3), phosphatidylinositol 4,5-bisphosphate (PtdIns(4,5)P2) and phosphatidylinositol 3,5-bisphosphate (PtdIns(3,5)P2). Specific for lipid substrates, inactive towards water soluble inositol phosphates. Plays an essential role in the primary cilium by controlling ciliary growth and phosphoinositide 3-kinase (PI3K) signaling and stability. This Homo sapiens (Human) protein is Phosphatidylinositol polyphosphate 5-phosphatase type IV (INPP5E).